The sequence spans 1370 residues: Zinc finger MYM-type protein 3 (1370 aa).

2 stretches are compositionally biased toward low complexity: residues 1–12 (MDPSDFPSPFDP) and 52–61 (PSSGALDLLD). Disordered regions lie at residues 1–72 (MDPS…DPGV) and 90–301 (PSPP…QRAG). The span at 230-253 (ASEKPPERKRSERVRRAEPPKPEV) shows a compositional bias: basic and acidic residues. Residues serine 263 and serine 267 each carry the phosphoserine modification. Positions 263–279 (SDEDSDAMVDDPNDEDF) are enriched in acidic residues. Glycyl lysine isopeptide (Lys-Gly) (interchain with G-Cter in SUMO2) cross-links involve residues lysine 308, lysine 320, and lysine 328. MYM-type zinc fingers lie at residues 332–366 (QLFC…TKDS), 378–422 (HEFC…LHEV), 429–464 (HRLC…KTGS), 477–511 (KRFC…FEML), 521–559 (SLFC…PCYY), 567–604 (YQFC…KPEV), 612–646 (FQFC…HEKL), 653–692 (KSFC…GVTE), and 699–733 (WDFC…LETI). At serine 464 the chain carries Phosphoserine. Polar residues predominate over residues 759–794 (NLDTQSGPESLLNSQSPESKPQTPSQTKVENSNTVR). The segment at 759–830 (NLDTQSGPES…PPPPATPRKN (72 aa)) is disordered. Residues lysine 778 and lysine 786 each participate in a glycyl lysine isopeptide (Lys-Gly) (interchain with G-Cter in SUMO2) cross-link. Threonine 795 bears the Phosphothreonine mark. A Glycyl lysine isopeptide (Lys-Gly) (interchain with G-Cter in SUMO2) cross-link involves residue lysine 804. The segment covering 815–826 (APTPPPPPPPAT) has biased composition (pro residues). Phosphothreonine is present on residues threonine 817 and threonine 826. Residues lysine 847, lysine 861, lysine 920, and lysine 1275 each participate in a glycyl lysine isopeptide (Lys-Gly) (interchain with G-Cter in SUMO2) cross-link.

In terms of assembly, may be a component of a BHC histone deacetylase complex that contains HDAC1, HDAC2, HMG20B/BRAF35, KDM1A, RCOR1/CoREST, PHF21A/BHC80, ZMYM2, ZNF217, ZMYM3, GSE1 and GTF2I. Most abundant in brain, moderate in muscle and heart, low in other tissues except placenta.

Its subcellular location is the nucleus. In terms of biological role, plays a role in the regulation of cell morphology and cytoskeletal organization. This is Zinc finger MYM-type protein 3 (ZMYM3) from Homo sapiens (Human).